Here is a 339-residue protein sequence, read N- to C-terminus: Terpene synthase 7 (339 aa).

Residues 79–84 (DDFLES) carry the DDxx(x)D/E motif motif. Residues 219 to 227 (NDCASYAKE) carry the NDxxSxxxD/E motif motif.

This sequence belongs to the terpene synthase family.

The catalysed reaction is (2E,6E)-farnesyl diphosphate = (-)-beta-barbatene + diphosphate. Terpene synthase that converts its substrate farnesyl diphosphate (FPP) into the sesquiterpene beta-barbatene. The chain is Terpene synthase 7 from Dictyostelium discoideum (Social amoeba).